A 318-amino-acid polypeptide reads, in one-letter code: N-succinylornithine carbamoyltransferase (318 aa).

Residues 47–50, Trp-75, and Arg-110 contribute to the carbamoyl phosphate site; that span reads SLRT. Glu-142 provides a ligand contact to N(2)-succinyl-L-ornithine. Residue 147–150 coordinates carbamoyl phosphate; that stretch reads HPLQ. N(2)-succinyl-L-ornithine contacts are provided by His-176 and Lys-236. A carbamoyl phosphate-binding site is contributed by 274–275; the sequence is CL. N(2)-succinyl-L-ornithine is bound at residue Arg-278. Arg-302 lines the carbamoyl phosphate pocket.

This sequence belongs to the aspartate/ornithine carbamoyltransferase superfamily. SOTCase family. As to quaternary structure, homotrimer.

It catalyses the reaction N(2)-succinyl-L-ornithine + carbamoyl phosphate = N(2)-succinyl-L-citrulline + phosphate + H(+). The protein operates within amino-acid biosynthesis; L-arginine biosynthesis. Its function is as follows. Catalyzes the transfer of the carbamoyl group from carbamoyl phosphate to the delta-amino group of N(2)-succinyl-L-ornithine to produce N(2)-succinyl-L-citrulline. Is essential for arginine biosynthesis. Has no activity with either L-ornithine or L-aspartate as substrate. Also has no detectable AOTCase activity, being unable to convert N(2)-acetyl-L-ornithine to N(2)-acetyl-L-citrulline. The polypeptide is N-succinylornithine carbamoyltransferase (Bacteroides fragilis (strain 638R)).